We begin with the raw amino-acid sequence, 144 residues long: SsrA-binding protein (144 aa).

The protein belongs to the SmpB family.

It is found in the cytoplasm. Its function is as follows. Required for rescue of stalled ribosomes mediated by trans-translation. Binds to transfer-messenger RNA (tmRNA), required for stable association of tmRNA with ribosomes. tmRNA and SmpB together mimic tRNA shape, replacing the anticodon stem-loop with SmpB. tmRNA is encoded by the ssrA gene; the 2 termini fold to resemble tRNA(Ala) and it encodes a 'tag peptide', a short internal open reading frame. During trans-translation Ala-aminoacylated tmRNA acts like a tRNA, entering the A-site of stalled ribosomes, displacing the stalled mRNA. The ribosome then switches to translate the ORF on the tmRNA; the nascent peptide is terminated with the 'tag peptide' encoded by the tmRNA and targeted for degradation. The ribosome is freed to recommence translation, which seems to be the essential function of trans-translation. In Thermus thermophilus (strain ATCC BAA-163 / DSM 7039 / HB27), this protein is SsrA-binding protein.